A 216-amino-acid chain; its full sequence is Nucleoside triphosphate pyrophosphatase (216 aa).

The active-site Proton acceptor is aspartate 82.

Belongs to the Maf family. A divalent metal cation is required as a cofactor.

The protein resides in the cytoplasm. It catalyses the reaction a ribonucleoside 5'-triphosphate + H2O = a ribonucleoside 5'-phosphate + diphosphate + H(+). It carries out the reaction a 2'-deoxyribonucleoside 5'-triphosphate + H2O = a 2'-deoxyribonucleoside 5'-phosphate + diphosphate + H(+). Nucleoside triphosphate pyrophosphatase. May have a dual role in cell division arrest and in preventing the incorporation of modified nucleotides into cellular nucleic acids. This Mycobacterium marinum (strain ATCC BAA-535 / M) protein is Nucleoside triphosphate pyrophosphatase.